A 399-amino-acid polypeptide reads, in one-letter code: Arylacetamide deacetylase (399 aa).

Residues 1 to 4 (MRKK) lie on the Cytoplasmic side of the membrane. Residues 5–25 (YFGFLILGVLLAGYIYVPLPD) traverse the membrane as a helical; Signal-anchor for type II membrane protein segment. The Lumenal portion of the chain corresponds to 26-399 (NVEEPWKIML…QYINWLHENL (374 aa)). Residues 111–113 (HGG) carry the Involved in the stabilization of the negatively charged intermediate by the formation of the oxyanion hole motif. A disulfide bond links Cys-116 and Cys-340. Residue Ser-189 is part of the active site. A glycan (N-linked (GlcNAc...) asparagine) is linked at Asn-282. Residues Asp-343 and His-373 contribute to the active site.

It belongs to the 'GDXG' lipolytic enzyme family.

It localises to the endoplasmic reticulum membrane. It is found in the microsome membrane. The catalysed reaction is a triacylglycerol + H2O = a diacylglycerol + a fatty acid + H(+). Displays cellular triglyceride lipase activity in liver, increases the levels of intracellular fatty acids derived from the hydrolysis of newly formed triglyceride stores and plays a role in very low-density lipoprotein assembly. Displays serine esterase activity in liver. Deacetylates a variety of arylacetamide substrates, including xenobiotic compounds and procarcinogens, converting them to the primary arylamide compounds and increasing their toxicity. In Bos taurus (Bovine), this protein is Arylacetamide deacetylase (AADAC).